The following is a 103-amino-acid chain: UPF0473 protein LCA_0390 (103 aa).

Belongs to the UPF0473 family.

In Latilactobacillus sakei subsp. sakei (strain 23K) (Lactobacillus sakei subsp. sakei), this protein is UPF0473 protein LCA_0390.